The primary structure comprises 242 residues: Uridylate kinase (242 aa).

15–18 contributes to the ATP binding site; it reads KLSG. The involved in allosteric activation by GTP stretch occupies residues 23-28; sequence GDEGFG. Gly57 serves as a coordination point for UMP. Gly58 and Arg62 together coordinate ATP. UMP is bound by residues Asp77 and 138–145; that span reads TGNPFCTT. The ATP site is built by Thr165, Tyr171, and Asp174.

It belongs to the UMP kinase family. Homohexamer.

The protein localises to the cytoplasm. The enzyme catalyses UMP + ATP = UDP + ADP. It participates in pyrimidine metabolism; CTP biosynthesis via de novo pathway; UDP from UMP (UMPK route): step 1/1. Allosterically activated by GTP. Inhibited by UTP. Catalyzes the reversible phosphorylation of UMP to UDP. The protein is Uridylate kinase of Shewanella sp. (strain MR-4).